Here is a 787-residue protein sequence, read N- to C-terminus: LPS-assembly protein LptD (787 aa).

Residues 1–78 (MAAGLPPLVV…AAGAAPAESG (78 aa)) form a disordered region. Residues 59–78 (LPPVGTPAEPAAGAAPAESG) show a composition bias toward low complexity.

It belongs to the LptD family. As to quaternary structure, component of the lipopolysaccharide transport and assembly complex. Interacts with LptE and LptA.

Functionally, together with LptE, is involved in the assembly of lipopolysaccharide (LPS) at the surface of the outer membrane. The chain is LPS-assembly protein LptD from Aromatoleum aromaticum (strain DSM 19018 / LMG 30748 / EbN1) (Azoarcus sp. (strain EbN1)).